The chain runs to 570 residues: uncharacterized protein (570 aa).

Low complexity predominate over residues 1 to 15; that stretch reads MTESIISSRTASISS. A disordered region spans residues 1–34; it reads MTESIISSRTASISSKEGYEIRQGSTDSSSLDLE. Residue S14 is modified to Phosphoserine. The next 12 helical transmembrane spans lie at 96 to 116, 141 to 161, 163 to 183, 198 to 218, 229 to 249, 261 to 281, 328 to 348, 369 to 389, 397 to 417, 423 to 443, 457 to 477, and 485 to 505; these read WKLY…LFIG, NLNT…HYIM, TFPL…IVFL, FFLG…MGMF, PVFW…AYGL, LFMI…FFYY, PITW…NLAY, VALA…MYLI, AMFW…LPWS, LATM…LGWT, GLMF…LWQS, and PAWI…YLVA.

The protein belongs to the major facilitator superfamily. Allantoate permease family.

It is found in the endoplasmic reticulum. The protein resides in the membrane. This is an uncharacterized protein from Schizosaccharomyces pombe (strain 972 / ATCC 24843) (Fission yeast).